We begin with the raw amino-acid sequence, 455 residues long: Neuronal acetylcholine receptor subunit beta-3 (455 aa).

An N-terminal signal peptide occupies residues 1-20 (MLCLMLCVLCWSRSDVAALG). The Extracellular portion of the chain corresponds to 21–229 (SVVENEDALL…VTYSFVLRRL (209 aa)). N-linked (GlcNAc...) asparagine glycans are attached at residues N48 and N163. A disulfide bond links C150 and C164. 3 helical membrane-spanning segments follow: residues 230–254 (PLFYTLFLIIPCLGLSFLTVLVFYL), 262–279 (LSLSTSVLVSLTVFLLVI), and 296–317 (YLLFIMIFVTLSIIVTVFVINV). Topologically, residues 318–425 (HHRSSATYHP…WKFVAQVLDR (108 aa)) are cytoplasmic. Residues 426 to 444 (IFLWLFLVVSVTGSVLIFT) form a helical membrane-spanning segment.

This sequence belongs to the ligand-gated ion channel (TC 1.A.9) family. Acetylcholine receptor (TC 1.A.9.1) subfamily. Beta-3/CHRNB3 sub-subfamily. As to quaternary structure, neuronal AChR seems to be composed of two different type of subunits: alpha and beta. CHRNB3/beta-3 subunit is only able to form functional nAChRs when co-assembled with another beta subunit. Participates in pentameric assemblies along with CHRNA4/alpha-4 and CHRNB2/beta-2 subunits and with CHRNA6/alpha-6 as well, forming stoichiometries such as (CHRNA3:CHRNB4)2:CHRNB3, (CHRNA4:CHRNB2)2:CHRNB3 or (CHRNA6:CHRNB2)2:CHRNB3. Relatively abundant in the developing retina and in the trigeminal ganglion.

It is found in the synaptic cell membrane. The protein resides in the cell membrane. It catalyses the reaction Ca(2+)(in) = Ca(2+)(out). It carries out the reaction K(+)(in) = K(+)(out). The enzyme catalyses Na(+)(in) = Na(+)(out). Its activity is regulated as follows. Activated by a myriad of ligands such as acetylcholine, cytisine, nicotine, choline and epibatidine. Its function is as follows. Component of neuronal acetylcholine receptors (nAChRs) that function as pentameric, ligand-gated cation channels with high calcium permeability among other activities. nAChRs are excitatory neurotrasnmitter receptors formed by a collection of nAChR subunits known to mediate synaptic transmission in the nervous system and the neuromuscular junction. Each nAchR subunit confers differential attributes to channel properties, including activation, deactivation and desensitization kinetics, pH sensitivity, cation permeability, and binding to allosteric modulators. Has an accessory rather than functional role and is only able to form functional nAChRs when co-assembled with another beta subunit. Participates in pentameric assemblies along with CHRNA3, CHRNA4, CHRNA6, CHRNB2 and CHRNB4. Modulates receptor assembly and increases receptor sensitivity to nicotine when associated with CHRNB2, CHRNA4 and/or CHRNA6 as well as CHRNA3 and CHRNB4. Seems to play a role in nicotine addiction. In Gallus gallus (Chicken), this protein is Neuronal acetylcholine receptor subunit beta-3 (CHRNB3).